The following is a 292-amino-acid chain: Shikimate dehydrogenase (NADP(+)) (292 aa).

Residues 22–24 and Ser69 each bind shikimate; that span reads SLS. Residue Lys73 is the Proton acceptor of the active site. Asn94 and Asp111 together coordinate shikimate. NADP(+) is bound by residues 135-139 and Ile236; that span reads GVGGA. Shikimate is bound at residue Tyr238. Gly260 provides a ligand contact to NADP(+).

The protein belongs to the shikimate dehydrogenase family. As to quaternary structure, homodimer.

It carries out the reaction shikimate + NADP(+) = 3-dehydroshikimate + NADPH + H(+). It functions in the pathway metabolic intermediate biosynthesis; chorismate biosynthesis; chorismate from D-erythrose 4-phosphate and phosphoenolpyruvate: step 4/7. Its function is as follows. Involved in the biosynthesis of the chorismate, which leads to the biosynthesis of aromatic amino acids. Catalyzes the reversible NADPH linked reduction of 3-dehydroshikimate (DHSA) to yield shikimate (SA). This Streptococcus pyogenes serotype M28 (strain MGAS6180) protein is Shikimate dehydrogenase (NADP(+)).